The sequence spans 432 residues: MPWDFNNYYSHNMDGLISKLKLSKTESDKLKALRQIVRERTRDVFQEARQVAIDVRRQALTLESVRLKLEKTNVRYLSPEERADLARLIFEMEDEARDDFIKFQPRFWTQGSFQYDTLNRPFHPGQEMDIDDGTYMPMTVFESEPSIGHTLLLLLVDTSLKSLEAENDGWVFEEKNTCGRIKIYREKTHIDVPMYAIPKEQFQKKQTAADSAHLIKSDSVFESFALNRGGREAYAVESDKVNLALREGVRRWSVSDPKIVEDWFNESCKRIGGHLRSVCRFMKAWRDAQWEVGGPSSISLMTAVVNILDRESHNGSDLTGTMKLIARLLPEEFNRGVESPDDTDEKPLFPAESNHNVHHRAIVETMEGLYGILLAAEQSESREEALRKINEAFGKRVTNALLITSSAAAPAFLNAPSKEPSSKPINKTMVSG.

GTP is bound at residue 110 to 115 (QGSFQY). Mg(2+)-binding residues include Asp129 and Asp131. Arg180 provides a ligand contact to ATP. Mg(2+) is bound at residue Asp191. Ser255 is an ATP binding site. The GTP site is built by Lys283, Ser297, and Asp344. A disordered region spans residues 413 to 432 (LNAPSKEPSSKPINKTMVSG). The segment covering 423–432 (KPINKTMVSG) has biased composition (polar residues).

This sequence belongs to the CD-NTase family. A01 subfamily. It depends on Mg(2+) as a cofactor.

It catalyses the reaction GTP + ATP = 3',3'-cGAMP + 2 diphosphate. Its function is as follows. Cyclic nucleotide synthase (second messenger synthase) of a CBASS antivirus system. CBASS (cyclic oligonucleotide-based antiphage signaling system) provides immunity against bacteriophage. The CD-NTase protein synthesizes cyclic nucleotides in response to infection; these serve as specific second messenger signals. The signals activate a diverse range of effectors, leading to bacterial cell death and thus abortive phage infection. A type II-C(GA) CBASS system. In terms of biological role, catalyzes the synthesis of 3'3'-cyclic GMP-AMP (3'3'-cGAMP) from GTP and ATP, a second messenger in cell signal transduction. Is also able to produce c-di-AMP and c-di-GMP from ATP and GTP, respectively; however, 3'3'-cGAMP is the dominant molecule produced by DncV in vivo, contrary to the 2'3'-cGAMP produced by eukaryotes. By producing cGAMP, down-regulates csgD expression and expression of flagellum regulon genes, which leads to the down-regulation of rdar biofilm formation and flagellum-mediated swimming and swarming motility in a temperature-dependent manner. Controls the activity of cGAMP-activated phospholipase CapV, a patatin-like lipase that is a direct 3',3'-cGAMP receptor encoded in the dncV operon. The sequence is that of Cyclic GMP-AMP synthase from Escherichia coli.